The primary structure comprises 627 residues: Protein fem-1 homolog B (627 aa).

ANK repeat units lie at residues 45–74 (QRSTPLIIAARNGHTKVVRLLLEHYRVQTQ), 87–116 (DGATALWCAAGAGHFEVVKLLVSHGANVNH), 120–149 (TNSTPLRAACFDGRLDIVKYLVENNANISI), 153–182 (YDNTCLMIAAYKGHTDVVRYLLEQHADPNA), 186–215 (CGATALHFAAEAGHLEIVRELVKWKAAMMV), and 218–248 (HGMTPLKVAAESCKADVVELLLAHAGCNRRS). The TPR repeat unit spans residues 344–377 (SHPIIYRGAVYADNMEFEQCIKLWLHALHLRQKG). ANK repeat units lie at residues 483-527 (DGST…DVNA) and 531-568 (EGNSPLHLIVQYHRPISDFLTLHSIIISLVEAGAHTDM).

It belongs to the fem-1 family. In terms of assembly, component of a CRL2 E3 ubiquitin-protein ligase complex, also named ECS (Elongin BC-CUL2/5-SOCS-box protein) complex.

It is found in the cytoplasm. The protein resides in the nucleus. The protein operates within protein modification; protein ubiquitination. Functionally, substrate-recognition component of a Cul2-RING (CRL2) E3 ubiquitin-protein ligase complex of the DesCEND (destruction via C-end degrons) pathway, which recognizes a C-degron located at the extreme C terminus of target proteins, leading to their ubiquitination and degradation. The C-degron recognized by the DesCEND pathway is usually a motif of less than ten residues and can be present in full-length proteins, truncated proteins or proteolytically cleaved forms. The CRL2(FEM1B) complex specifically recognizes proteins ending with -Gly-Leu-Asp-Arg, leading to their ubiquitination and degradation. The protein is Protein fem-1 homolog B of Gallus gallus (Chicken).